Here is a 190-residue protein sequence, read N- to C-terminus: Imidazoleglycerol-phosphate dehydratase (190 aa).

It belongs to the imidazoleglycerol-phosphate dehydratase family.

It localises to the cytoplasm. The enzyme catalyses D-erythro-1-(imidazol-4-yl)glycerol 3-phosphate = 3-(imidazol-4-yl)-2-oxopropyl phosphate + H2O. It participates in amino-acid biosynthesis; L-histidine biosynthesis; L-histidine from 5-phospho-alpha-D-ribose 1-diphosphate: step 6/9. This Methanococcus maripaludis (strain C5 / ATCC BAA-1333) protein is Imidazoleglycerol-phosphate dehydratase.